The primary structure comprises 539 residues: O-phosphoserine--tRNA(Cys) ligase (539 aa).

Substrate-binding positions include 188–190 (HMT), 233–235 (SAS), 275–276 (YY), and Asn-327.

Belongs to the class-II aminoacyl-tRNA synthetase family. O-phosphoseryl-tRNA(Cys) synthetase subfamily. In terms of assembly, homotetramer. Interacts with SepCysS.

The enzyme catalyses tRNA(Cys) + O-phospho-L-serine + ATP = O-phospho-L-seryl-tRNA(Cys) + AMP + diphosphate. Functionally, catalyzes the attachment of O-phosphoserine (Sep) to tRNA(Cys). This chain is O-phosphoserine--tRNA(Cys) ligase, found in Methanosarcina mazei (strain ATCC BAA-159 / DSM 3647 / Goe1 / Go1 / JCM 11833 / OCM 88) (Methanosarcina frisia).